The primary structure comprises 325 residues: Putative carboxypeptidase YocD (325 aa).

Serine 111 acts as the Nucleophile in catalysis. Catalysis depends on charge relay system residues glutamate 228 and histidine 296.

The protein belongs to the peptidase S66 family.

In Bacillus subtilis (strain 168), this protein is Putative carboxypeptidase YocD (yocD).